The following is an 838-amino-acid chain: Protein translocase subunit SecA 1 (838 aa).

ATP contacts are provided by residues Gln-85, 103–107 (GEGKT), and Asp-493. Residues Cys-823, Cys-825, Cys-834, and His-835 each coordinate Zn(2+).

This sequence belongs to the SecA family. In terms of assembly, monomer and homodimer. Part of the essential Sec protein translocation apparatus which comprises SecA, SecYEG and auxiliary proteins SecDF. Other proteins may also be involved. Zn(2+) is required as a cofactor.

The protein resides in the cell membrane. The protein localises to the cytoplasm. It catalyses the reaction ATP + H2O + cellular proteinSide 1 = ADP + phosphate + cellular proteinSide 2.. Its function is as follows. Part of the Sec protein translocase complex. Interacts with the SecYEG preprotein conducting channel. Has a central role in coupling the hydrolysis of ATP to the transfer of proteins into and across the cell membrane, serving as an ATP-driven molecular motor driving the stepwise translocation of polypeptide chains across the membrane. This Streptococcus gordonii protein is Protein translocase subunit SecA 1.